The chain runs to 206 residues: Small ribosomal subunit protein uS4 (206 aa).

The S4 RNA-binding domain occupies 96–156; sequence GRLDNVVYRM…EKSKKQARIK (61 aa).

The protein belongs to the universal ribosomal protein uS4 family. In terms of assembly, part of the 30S ribosomal subunit. Contacts protein S5. The interaction surface between S4 and S5 is involved in control of translational fidelity.

Its function is as follows. One of the primary rRNA binding proteins, it binds directly to 16S rRNA where it nucleates assembly of the body of the 30S subunit. In terms of biological role, with S5 and S12 plays an important role in translational accuracy. This Haemophilus influenzae (strain ATCC 51907 / DSM 11121 / KW20 / Rd) protein is Small ribosomal subunit protein uS4.